The primary structure comprises 456 residues: Adenylosuccinate lyase (456 aa).

N(6)-(1,2-dicarboxyethyl)-AMP contacts are provided by residues 15–16 (RY) and 90–92 (NHD). Lys94 carries the post-translational modification N6-acetyllysine. 122 to 123 (TS) serves as a coordination point for N(6)-(1,2-dicarboxyethyl)-AMP. The active-site Proton donor/acceptor is His171. Gln247 provides a ligand contact to N(6)-(1,2-dicarboxyethyl)-AMP. Residue Ser295 is the Proton donor/acceptor of the active site. N(6)-(1,2-dicarboxyethyl)-AMP-binding positions include Ser296, 301–303 (KVN), Asn309, Arg335, and 340–344 (STVLR). Position 366 is an N6-acetyllysine (Lys366).

This sequence belongs to the lyase 1 family. Adenylosuccinate lyase subfamily. Homotetramer. Residues from neighboring subunits contribute catalytic and substrate-binding residues to each active site.

It carries out the reaction N(6)-(1,2-dicarboxyethyl)-AMP = fumarate + AMP. The catalysed reaction is (2S)-2-[5-amino-1-(5-phospho-beta-D-ribosyl)imidazole-4-carboxamido]succinate = 5-amino-1-(5-phospho-beta-D-ribosyl)imidazole-4-carboxamide + fumarate. Its pathway is purine metabolism; AMP biosynthesis via de novo pathway; AMP from IMP: step 2/2. It participates in purine metabolism; IMP biosynthesis via de novo pathway; 5-amino-1-(5-phospho-D-ribosyl)imidazole-4-carboxamide from 5-amino-1-(5-phospho-D-ribosyl)imidazole-4-carboxylate: step 2/2. Catalyzes two reactions in de novo purine nucleotide biosynthesis. Catalyzes the breakdown of 5-aminoimidazole- (N-succinylocarboxamide) ribotide (SAICAR or 2-[5-amino-1-(5-phospho-beta-D-ribosyl)imidazole-4-carboxamido]succinate) to 5-aminoimidazole-4-carboxamide ribotide (AICAR or 5-amino-1-(5-phospho-beta-D-ribosyl)imidazole-4-carboxamide) and fumarate, and of adenylosuccinate (ADS or N(6)-(1,2-dicarboxyethyl)-AMP) to adenosine monophosphate (AMP) and fumarate. The protein is Adenylosuccinate lyase (purB) of Escherichia coli O6:H1 (strain CFT073 / ATCC 700928 / UPEC).